The chain runs to 118 residues: Large ribosomal subunit protein bL19 (118 aa).

It belongs to the bacterial ribosomal protein bL19 family.

This protein is located at the 30S-50S ribosomal subunit interface and may play a role in the structure and function of the aminoacyl-tRNA binding site. This is Large ribosomal subunit protein bL19 from Metamycoplasma arthritidis (strain 158L3-1) (Mycoplasma arthritidis).